Here is a 183-residue protein sequence, read N- to C-terminus: MTRTQKEKMLAGEMYNAADPEIQADLLAAGAWLKRYNSTLGDSAEQWHLFLREGLGEVGPGAVIRPPFHCDYGFNISIGAHAYMNFNCVILDVAKVTIGDGTAIGPAVQIYTADHPDDPEQRQAGLQLGRPVRIGKHVWIGGGAIILPGVTIGDHAVVGAGSVVTRDVPPGAKVMGSPARVRG.

Belongs to the transferase hexapeptide repeat family.

In terms of biological role, acetyltransferase implicated in the O-acetylation of Nod factors. This is Nodulation protein L (nodL) from Rhizobium meliloti (strain 1021) (Ensifer meliloti).